The primary structure comprises 61 residues: Putative antitoxin PYRAB11980 (61 aa).

It belongs to the UPF0165 family.

Possibly the antitoxin component of a type II toxin-antitoxin (TA) system. This Pyrococcus abyssi (strain GE5 / Orsay) protein is Putative antitoxin PYRAB11980.